The sequence spans 274 residues: Rhamnulose-1-phosphate aldolase (274 aa).

E117 is an active-site residue. 3 residues coordinate Zn(2+): H141, H143, and H212.

The protein belongs to the aldolase class II family. RhaD subfamily. Homotetramer. Zn(2+) is required as a cofactor.

It is found in the cytoplasm. It carries out the reaction L-rhamnulose 1-phosphate = (S)-lactaldehyde + dihydroxyacetone phosphate. The protein operates within carbohydrate degradation; L-rhamnose degradation; glycerone phosphate from L-rhamnose: step 3/3. In terms of biological role, catalyzes the reversible cleavage of L-rhamnulose-1-phosphate to dihydroxyacetone phosphate (DHAP) and L-lactaldehyde. In Shigella sonnei (strain Ss046), this protein is Rhamnulose-1-phosphate aldolase.